A 944-amino-acid polypeptide reads, in one-letter code: Isoleucine--tRNA ligase (944 aa).

The 'HIGH' region motif lies at 58–68 (PYANGSIHIGH). L-isoleucyl-5'-AMP is bound at residue Glu563. Residues 604–608 (KMSKS) carry the 'KMSKS' region motif. Lys607 provides a ligand contact to ATP. Zn(2+) contacts are provided by Cys907, Cys910, Cys927, and Cys930.

Belongs to the class-I aminoacyl-tRNA synthetase family. IleS type 1 subfamily. As to quaternary structure, monomer. The cofactor is Zn(2+).

The protein resides in the cytoplasm. It carries out the reaction tRNA(Ile) + L-isoleucine + ATP = L-isoleucyl-tRNA(Ile) + AMP + diphosphate. Catalyzes the attachment of isoleucine to tRNA(Ile). As IleRS can inadvertently accommodate and process structurally similar amino acids such as valine, to avoid such errors it has two additional distinct tRNA(Ile)-dependent editing activities. One activity is designated as 'pretransfer' editing and involves the hydrolysis of activated Val-AMP. The other activity is designated 'posttransfer' editing and involves deacylation of mischarged Val-tRNA(Ile). This Salmonella paratyphi A (strain ATCC 9150 / SARB42) protein is Isoleucine--tRNA ligase.